We begin with the raw amino-acid sequence, 83 residues long: Cytochrome b559 subunit alpha (83 aa).

Residues 21–35 (VIHSITIPSLFIAGW) form a helical membrane-spanning segment. His-23 is a binding site for heme.

This sequence belongs to the PsbE/PsbF family. In terms of assembly, heterodimer of an alpha subunit and a beta subunit. PSII is composed of 1 copy each of membrane proteins PsbA, PsbB, PsbC, PsbD, PsbE, PsbF, PsbH, PsbI, PsbJ, PsbK, PsbL, PsbM, PsbT, PsbX, PsbY, PsbZ, Psb30/Ycf12, at least 3 peripheral proteins of the oxygen-evolving complex and a large number of cofactors. It forms dimeric complexes. Heme b serves as cofactor.

The protein localises to the plastid. It localises to the chloroplast thylakoid membrane. In terms of biological role, this b-type cytochrome is tightly associated with the reaction center of photosystem II (PSII). PSII is a light-driven water:plastoquinone oxidoreductase that uses light energy to abstract electrons from H(2)O, generating O(2) and a proton gradient subsequently used for ATP formation. It consists of a core antenna complex that captures photons, and an electron transfer chain that converts photonic excitation into a charge separation. This Physcomitrium patens (Spreading-leaved earth moss) protein is Cytochrome b559 subunit alpha.